The following is a 253-amino-acid chain: Major prion protein (253 aa).

A signal peptide spans 1-22; the sequence is MANLGCWMLVLFVATWSNLGLC. The segment at 23–38 is interaction with ADGRG6; that stretch reads KKRPKPGGWNTGGSRY. An interaction with GRB2, ERI3 and SYN1 region spans residues 23–230; it reads KKRPKPGGWN…ESQAYYQRGS (208 aa). The segment at 25–108 is disordered; sequence RPKPGGWNTG…WNKPSKPKTN (84 aa). 5 repeat units span residues 51-59, 60-67, 68-75, 76-83, and 84-91. Residues 51–91 form a 5 X 8 AA tandem repeats of P-H-G-G-G-W-G-Q region; that stretch reads PQGGGGWGQPHGGGWGQPHGGGWGQPHGGGWGQPHGGGWGQ. The segment covering 52-95 has biased composition (gly residues); sequence QGGGGWGQPHGGGWGQPHGGGWGQPHGGGWGQPHGGGWGQGGGT. Cu(2+)-binding residues include H61, G62, G63, H69, G70, G71, H77, G78, G79, H85, G86, and G87. Cysteines 179 and 214 form a disulfide. Residues N181 and N197 are each glycosylated (N-linked (GlcNAc...) asparagine). A lipid anchor (GPI-anchor amidated serine) is attached at S230. The propeptide at 231–253 is removed in mature form; it reads SMVLFSSPPVILLISFLIFLIVG.

This sequence belongs to the prion family. In terms of assembly, monomer and homodimer. Has a tendency to aggregate into amyloid fibrils containing a cross-beta spine, formed by a steric zipper of superposed beta-strands. Soluble oligomers may represent an intermediate stage on the path to fibril formation. Copper binding may promote oligomerization. Interacts with GRB2, APP, ERI3/PRNPIP and SYN1. Mislocalized cytosolically exposed PrP interacts with MGRN1; this interaction alters MGRN1 subcellular location and causes lysosomal enlargement. Interacts with APP. Interacts with KIAA1191. Interacts with ADGRG6.

It localises to the cell membrane. The protein resides in the golgi apparatus. Its primary physiological function is unclear. May play a role in neuronal development and synaptic plasticity. May be required for neuronal myelin sheath maintenance. May promote myelin homeostasis through acting as an agonist for ADGRG6 receptor. May play a role in iron uptake and iron homeostasis. Soluble oligomers are toxic to cultured neuroblastoma cells and induce apoptosis (in vitro). Association with GPC1 (via its heparan sulfate chains) targets PRNP to lipid rafts. Also provides Cu(2+) or Zn(2+) for the ascorbate-mediated GPC1 deaminase degradation of its heparan sulfate side chains. The sequence is that of Major prion protein (PRNP) from Pongo pygmaeus (Bornean orangutan).